The sequence spans 431 residues: Growth-regulating factor 9 (431 aa).

One can recognise a QLQ domain in the interval 24–59 (WMKAAQLMEFRMQALVYRYIEAGLRVPHHLVVPIWN). WRC domains lie at 89-133 (ETEP…LVES) and 307-351 (DNEP…VDTT). 4 short sequence motifs (bipartite nuclear localization signal) span residues 94–104 (RCRRTDGKKWR), 122–129 (RGRKRSRK), 312–322 (RCRRTDGKKWR), and 340–345 (RGMKKK).

It belongs to the GRF family. In terms of assembly, interacts with GIF1. Detected in the shoot apical meristem (SAM) and in young leaf primordium.

The protein localises to the nucleus. In terms of biological role, transcription activator that plays a role in the regulation of cell expansion in leaf and cotyledons tissues. Component of a network formed by miR396, the GRFs and their interacting factors (GIFs) acting in the regulation of meristem function, at least partially through the control of cell proliferation. The chain is Growth-regulating factor 9 (GRF9) from Arabidopsis thaliana (Mouse-ear cress).